Here is a 464-residue protein sequence, read N- to C-terminus: MTDKQQNKLWGGRFSESTDQFVQEFTASVNFDRRMYRQDIYGSQAHATMLAEVGVLTDEERDAIIVGLREIQLEIENGEFQWSVALEDVHMNIEARLTDKIGITGKKLHTGRSRNDQVATDIRLWLRDELLILEEQFLHLMQGLLNLAEREAATIMPGFTHLQTAQPVTFGHHLLAWFEMLKRDRERLLDCKKRVNRMPLGAAALAGTTYPINRERTCELLGFDGVCENSLDAVSDRDFAIEFCAMAALTMTHLSRISEELVLWTSAQFNFINLPDRFCTGSSIMPQKKNPDVPELVRGKTGRVNGHLISLLTLMKSQPLAYNKDNQEDKEPLYDAVDTLKGSLRAFGDMIPALEPNREVMREAARRGFATATDLADYLVRKGIAFRDSHEIVGKAVAYGVEKKKDLGDMSLSELKQFSDQIEDNVFEVLTLEGSVSARNHIGGTAPDQVRAAVARAREALDNT.

The protein belongs to the lyase 1 family. Argininosuccinate lyase subfamily.

It is found in the cytoplasm. The catalysed reaction is 2-(N(omega)-L-arginino)succinate = fumarate + L-arginine. It functions in the pathway amino-acid biosynthesis; L-arginine biosynthesis; L-arginine from L-ornithine and carbamoyl phosphate: step 3/3. The chain is Argininosuccinate lyase from Alcanivorax borkumensis (strain ATCC 700651 / DSM 11573 / NCIMB 13689 / SK2).